The chain runs to 394 residues: ATP phosphoribosyltransferase regulatory subunit (394 aa).

Belongs to the class-II aminoacyl-tRNA synthetase family. HisZ subfamily. In terms of assembly, heteromultimer composed of HisG and HisZ subunits.

The protein localises to the cytoplasm. Its pathway is amino-acid biosynthesis; L-histidine biosynthesis; L-histidine from 5-phospho-alpha-D-ribose 1-diphosphate: step 1/9. Required for the first step of histidine biosynthesis. May allow the feedback regulation of ATP phosphoribosyltransferase activity by histidine. The polypeptide is ATP phosphoribosyltransferase regulatory subunit (Geobacillus kaustophilus (strain HTA426)).